Consider the following 63-residue polypeptide: Large ribosomal subunit protein uL29 (63 aa).

The protein belongs to the universal ribosomal protein uL29 family.

This chain is Large ribosomal subunit protein uL29, found in Edwardsiella ictaluri (strain 93-146).